Consider the following 258-residue polypeptide: Triosephosphate isomerase (258 aa).

9 to 11 (NWK) provides a ligand contact to substrate. The active-site Electrophile is the H95. E167 acts as the Proton acceptor in catalysis. Substrate contacts are provided by G173 and S212.

Belongs to the triosephosphate isomerase family. Homodimer.

The protein localises to the cytoplasm. It catalyses the reaction D-glyceraldehyde 3-phosphate = dihydroxyacetone phosphate. The protein operates within carbohydrate biosynthesis; gluconeogenesis. It functions in the pathway carbohydrate degradation; glycolysis; D-glyceraldehyde 3-phosphate from glycerone phosphate: step 1/1. Involved in the gluconeogenesis. Catalyzes stereospecifically the conversion of dihydroxyacetone phosphate (DHAP) to D-glyceraldehyde-3-phosphate (G3P). The chain is Triosephosphate isomerase from Blochmanniella pennsylvanica (strain BPEN).